A 400-amino-acid chain; its full sequence is Ribosomal RNA large subunit methyltransferase I (400 aa).

A PUA domain is found at 6 to 84 (FPRLVLAKGR…NEAIDSAFFE (79 aa)).

This sequence belongs to the methyltransferase superfamily. RlmI family.

The protein localises to the cytoplasm. The catalysed reaction is cytidine(1962) in 23S rRNA + S-adenosyl-L-methionine = 5-methylcytidine(1962) in 23S rRNA + S-adenosyl-L-homocysteine + H(+). Functionally, specifically methylates the cytosine at position 1962 (m5C1962) of 23S rRNA. This is Ribosomal RNA large subunit methyltransferase I from Klebsiella pneumoniae subsp. pneumoniae (strain ATCC 700721 / MGH 78578).